Reading from the N-terminus, the 817-residue chain is MPNSSSTSQPATTGSETASTSYVNYVEMSAEQEYFLYELETTDSGSMGLVLRAIYDTGDVQSFARALQQRISHYDKNIQKVCSFHYQSFVDAMQELMKLKEQCQDIKEETVAIDAEIQQISQRLCQKKQEIVRYRKLMKNAKTAMDQIAVCLPVLENYAKLQEQMSNRKYYQALKTLEELEHTHLALVEKYRFTQVLAKSMAPVRLEIKEKAYSEFKDFLENIKKVAGRIGKHASKDTAEQHSFGVTDAERAKKIQEEARKNASNVEIEVSADGSIVKKNMSPKRNMKMQVEDDEQVSAQDLIDFTPVHRCCQIFNVLGAKEEFEQYYRQQRKEQCDLVIEPTHKMNNFKHYVEYLDEIVGFFVVEDQILMTQSNLSTTVDKDKLWDNALMKIRQHLDARFGGSPDVLMMLKMKKVILLFILTMKSYGYAVAPLYELLQNFRDQYNEILVKEYCAQFERDLEKDNYTPITVNSEEEFRTIIRKFPFYKRSMEQEPFPRRFPFSPFVTDAYTQAKNYLIGCLKFMDNLQLNTSAVDDTVRRCANVLLGRWAGVLKSFVHKRLSMIQLVQITINLGYLEKSCESLGAFITSKTSGEEAIGTTSHQVVLSEKVFRDVRSEVEQQIDECMRSKVDEIIDLANYDWELPAAAGQASEFISDLINFLQTTFTSFTNLPSGLAKHVCTQTCKHISQSMSDFLLSPETKCISTGALDQFSLDVMQCEMFTTRCPVAGVDPQTLSMTFADLRQLLDLVMSSDWTTFNAEYGKDHAKYLRVKASTAIVVLEKMIEFERKSTGFFGIAKGDRKKLLDTIVRQLKLLEI.

Coiled-coil stretches lie at residues 87-149 (QSFV…DQIA) and 247-270 (TDAERAKKIQEEARKNASNVEIEV).

This sequence belongs to the SEC15 family. As to quaternary structure, the exocyst complex is composed of sec-3/exoc1, sec-5/exoc2, sec-6/exoc3, sec-8/exoc4, sec-10/exoc5, sec-15/exoc6, exo-70/exoc7 and exo-84/exoc8.

In terms of biological role, component of the exocyst complex involved in the docking of exocytic vesicles with fusion sites on the plasma membrane. In Caenorhabditis elegans, this protein is Exocyst complex component 6 (sec-15).